Reading from the N-terminus, the 373-residue chain is 4-hydroxy-3-methylbut-2-en-1-yl diphosphate synthase (flavodoxin) (373 aa).

Positions 270, 273, 305, and 312 each coordinate [4Fe-4S] cluster.

It belongs to the IspG family. Requires [4Fe-4S] cluster as cofactor.

The catalysed reaction is (2E)-4-hydroxy-3-methylbut-2-enyl diphosphate + oxidized [flavodoxin] + H2O + 2 H(+) = 2-C-methyl-D-erythritol 2,4-cyclic diphosphate + reduced [flavodoxin]. Its pathway is isoprenoid biosynthesis; isopentenyl diphosphate biosynthesis via DXP pathway; isopentenyl diphosphate from 1-deoxy-D-xylulose 5-phosphate: step 5/6. Its function is as follows. Converts 2C-methyl-D-erythritol 2,4-cyclodiphosphate (ME-2,4cPP) into 1-hydroxy-2-methyl-2-(E)-butenyl 4-diphosphate. The protein is 4-hydroxy-3-methylbut-2-en-1-yl diphosphate synthase (flavodoxin) of Sodalis glossinidius (strain morsitans).